The chain runs to 413 residues: Serine hydroxymethyltransferase (413 aa).

(6S)-5,6,7,8-tetrahydrofolate-binding positions include L119 and 123–125; that span reads GHL. At K228 the chain carries N6-(pyridoxal phosphate)lysine. Residue 351–353 participates in (6S)-5,6,7,8-tetrahydrofolate binding; that stretch reads SPF.

It belongs to the SHMT family. In terms of assembly, homodimer. The cofactor is pyridoxal 5'-phosphate.

The protein resides in the cytoplasm. The enzyme catalyses (6R)-5,10-methylene-5,6,7,8-tetrahydrofolate + glycine + H2O = (6S)-5,6,7,8-tetrahydrofolate + L-serine. It participates in one-carbon metabolism; tetrahydrofolate interconversion. The protein operates within amino-acid biosynthesis; glycine biosynthesis; glycine from L-serine: step 1/1. Catalyzes the reversible interconversion of serine and glycine with tetrahydrofolate (THF) serving as the one-carbon carrier. This reaction serves as the major source of one-carbon groups required for the biosynthesis of purines, thymidylate, methionine, and other important biomolecules. Also exhibits THF-independent aldolase activity toward beta-hydroxyamino acids, producing glycine and aldehydes, via a retro-aldol mechanism. The chain is Serine hydroxymethyltransferase from Lysinibacillus sphaericus (strain C3-41).